The chain runs to 153 residues: Alpha-amylase type B isozyme (153 aa).

Substrate contacts are provided by residues Lys-19, 25 to 27, His-38, Gln-44, Lys-123, and Trp-150; that span reads GWW.

It belongs to the glycosyl hydrolase 13 family. In terms of assembly, monomer. Ca(2+) is required as a cofactor.

It catalyses the reaction Endohydrolysis of (1-&gt;4)-alpha-D-glucosidic linkages in polysaccharides containing three or more (1-&gt;4)-alpha-linked D-glucose units.. In Hordeum vulgare (Barley), this protein is Alpha-amylase type B isozyme (AMY1.4).